Reading from the N-terminus, the 500-residue chain is Probable betaine aldehyde dehydrogenase (500 aa).

Residue 249–254 (GSLATG) coordinates NAD(+). E271 acts as the Proton acceptor in catalysis. Residue C305 is the Nucleophile of the active site.

Belongs to the aldehyde dehydrogenase family.

The enzyme catalyses betaine aldehyde + NAD(+) + H2O = glycine betaine + NADH + 2 H(+). Its pathway is amine and polyamine biosynthesis; betaine biosynthesis via choline pathway; betaine from betaine aldehyde: step 1/1. This chain is Probable betaine aldehyde dehydrogenase (meu8), found in Schizosaccharomyces pombe (strain 972 / ATCC 24843) (Fission yeast).